The sequence spans 306 residues: Glutathione transport system permease protein GsiC (306 aa).

Topologically, residues 1 to 8 are cytoplasmic; sequence MLNYFIKR. The helical transmembrane segment at 9 to 29 threads the bilayer; sequence LLGLIPTLLIVMVLVFLFVHL. Over 30 to 98 the chain is Periplasmic; sequence LPGDPARLAA…QEIALRFMPT (69 aa). In terms of domain architecture, ABC transmembrane type-1 spans 95–292; sequence FMPTFWLTVC…LEFILINLLV (198 aa). A helical membrane pass occupies residues 99–119; the sequence is FWLTVCSMAWAVIFGMAIGIV. Over 120 to 130 the chain is Cytoplasmic; that stretch reads SAVWRNGWPDR. The chain crosses the membrane as a helical span at residues 131 to 151; that stretch reads IGMTLAVSGLSFPAFALGMLL. Over 152-168 the chain is Periplasmic; the sequence is MQIFSVELGWLPTVGAD. The helical transmembrane segment at 169–189 threads the bilayer; it reads TWLHYILPSLTLGAAVAAVMA. The Cytoplasmic portion of the chain corresponds to 190-228; that stretch reads RFTRASFVDVLQEDYMRTARAKGVRESLVVLKHGLRNAL. A helical membrane pass occupies residues 229–249; it reads IPVVTMMGLQFGFLLGGSIVV. The Periplasmic portion of the chain corresponds to 250–278; that stretch reads EKVFNWPGLGRLLVDSVEMRDYPVIQAEV. A helical membrane pass occupies residues 279 to 299; sequence LLFSLEFILINLLVDMLYAAI. Topologically, residues 300-306 are cytoplasmic; the sequence is NPAIRYK.

It belongs to the binding-protein-dependent transport system permease family. In terms of assembly, the complex is composed of two ATP-binding proteins (GsiA), two transmembrane proteins (GsiC and GsiD) and a solute-binding protein (GsiB).

The protein resides in the cell inner membrane. Part of the ABC transporter complex GsiABCD involved in glutathione import. Probably responsible for the translocation of the substrate across the membrane. The chain is Glutathione transport system permease protein GsiC from Pectobacterium atrosepticum (strain SCRI 1043 / ATCC BAA-672) (Erwinia carotovora subsp. atroseptica).